A 249-amino-acid chain; its full sequence is 1-(5-phosphoribosyl)-5-[(5-phosphoribosylamino)methylideneamino] imidazole-4-carboxamide isomerase (249 aa).

The active-site Proton acceptor is the Asp10. Asp136 acts as the Proton donor in catalysis.

This sequence belongs to the HisA/HisF family.

The protein resides in the cytoplasm. It catalyses the reaction 1-(5-phospho-beta-D-ribosyl)-5-[(5-phospho-beta-D-ribosylamino)methylideneamino]imidazole-4-carboxamide = 5-[(5-phospho-1-deoxy-D-ribulos-1-ylimino)methylamino]-1-(5-phospho-beta-D-ribosyl)imidazole-4-carboxamide. Its pathway is amino-acid biosynthesis; L-histidine biosynthesis; L-histidine from 5-phospho-alpha-D-ribose 1-diphosphate: step 4/9. This is 1-(5-phosphoribosyl)-5-[(5-phosphoribosylamino)methylideneamino] imidazole-4-carboxamide isomerase from Symbiobacterium thermophilum (strain DSM 24528 / JCM 14929 / IAM 14863 / T).